The sequence spans 338 residues: Ketol-acid reductoisomerase (NADP(+)) (338 aa).

Residues 1-181 (MTVYYDKDCN…GGGRTAIIET (181 aa)) form the KARI N-terminal Rossmann domain. NADP(+)-binding positions include 24–27 (FGSQ), R47, S52, and 82–85 (DENQ). The active site involves H107. G133 is an NADP(+) binding site. A KARI C-terminal knotted domain is found at 182 to 327 (TFKDETETDL…VKLRTMMPWI (146 aa)). Residues D190, E194, E226, and E230 each contribute to the Mg(2+) site. Residue S251 coordinates substrate.

This sequence belongs to the ketol-acid reductoisomerase family. Mg(2+) serves as cofactor.

The catalysed reaction is (2R)-2,3-dihydroxy-3-methylbutanoate + NADP(+) = (2S)-2-acetolactate + NADPH + H(+). It catalyses the reaction (2R,3R)-2,3-dihydroxy-3-methylpentanoate + NADP(+) = (S)-2-ethyl-2-hydroxy-3-oxobutanoate + NADPH + H(+). The protein operates within amino-acid biosynthesis; L-isoleucine biosynthesis; L-isoleucine from 2-oxobutanoate: step 2/4. It participates in amino-acid biosynthesis; L-valine biosynthesis; L-valine from pyruvate: step 2/4. Functionally, involved in the biosynthesis of branched-chain amino acids (BCAA). Catalyzes an alkyl-migration followed by a ketol-acid reduction of (S)-2-acetolactate (S2AL) to yield (R)-2,3-dihydroxy-isovalerate. In the isomerase reaction, S2AL is rearranged via a Mg-dependent methyl migration to produce 3-hydroxy-3-methyl-2-ketobutyrate (HMKB). In the reductase reaction, this 2-ketoacid undergoes a metal-dependent reduction by NADPH to yield (R)-2,3-dihydroxy-isovalerate. This chain is Ketol-acid reductoisomerase (NADP(+)), found in Sulfurimonas denitrificans (strain ATCC 33889 / DSM 1251) (Thiomicrospira denitrificans (strain ATCC 33889 / DSM 1251)).